The primary structure comprises 921 residues: Ribosome-releasing factor 2, mitochondrial (921 aa).

A mitochondrion-targeting transit peptide spans 1 to 55 (MVSALLLRARQNGRAARCLDYPKVKCWALASLPKSSLEKPGFSQVRRFSVFHPQS). Positions 60–368 (DLTRNIGIIA…SVVDLLPSPQ (309 aa)) constitute a tr-type G domain. Residues 69–76 (AHIDAGKT), 152–156 (DTPGH), and 206–209 (NKMD) contribute to the GTP site.

It belongs to the TRAFAC class translation factor GTPase superfamily. Classic translation factor GTPase family. EF-G/EF-2 subfamily.

It is found in the mitochondrion. Functionally, mitochondrial GTPase that mediates the disassembly of ribosomes from messenger RNA at the termination of mitochondrial protein biosynthesis. Not involved in the GTP-dependent ribosomal translocation step during translation elongation. The protein is Ribosome-releasing factor 2, mitochondrial (mef2) of Emericella nidulans (strain FGSC A4 / ATCC 38163 / CBS 112.46 / NRRL 194 / M139) (Aspergillus nidulans).